We begin with the raw amino-acid sequence, 566 residues long: Sodium-dependent high-affinity dicarboxylate transporter 3 (566 aa).

12 consecutive transmembrane segments (helical) span residues 55-75, 92-112, 123-139, 162-182, 219-239, 268-288, 329-349, 352-372, 400-420, 439-459, 496-516, and 521-541; these read LVLV…GPEW, VMPL…VGVL, NDTN…AAAV, WIML…SNTA, MATG…TGTA, WIFF…MTLV, ILLS…GVFF, GAYT…VLPS, ETFP…AAGV, LPLW…TNIC, FAFI…SGMV, and MAFV…LYMN.

Belongs to the SLC13A/DASS transporter (TC 2.A.47) family. NADC subfamily. Nad-1 and nad-2 are coexpressed in the intestinal tract from early larvae to adults, expression is from the pharynx through to the anus. Expression level is significantly greater in the anterior half of the intestine than in the posterior half.

It is found in the membrane. In terms of biological role, high-affinity sodium-dicarboxylate cotransporter that accepts a range of tricarboxylic acid-cycle intermediates with 4-5 carbon atoms. There is no interaction with monocarboxylates. Plays a role in the regulation of life span. The sequence is that of Sodium-dependent high-affinity dicarboxylate transporter 3 (nac-3) from Caenorhabditis elegans.